A 354-amino-acid chain; its full sequence is MAFFSTQPPYMNPVIPFTGIIQGGLQNGLQITLQGTVHPFPNRIAVNFQTGFSGNDIAFHFNPRFEEGGYVVCNTKQNGKWGPEERKMQMPFQKGMPFELCFLVQRSEFKVMVNKNFFVQYSHRVPYHLVDTISVSGCLHLSFINFQNSTAAPVQPVFSTMQFSQPVQFPRMPKGRKQRTQGFQPALQAPVAQTIIHTVHSIPGQMLSTPGIPPMAYPTPAYTIPFFTSIPNGFYPSKSINISGVVLPDAKRFHINLRCGGDIAFHLNPRFNEKVVVRNTQINNSWGPEERSLPGRMPFNRGQSFSVWILCEGHCFKVAVDGQHICEYYHRLKNLPDINTLEVAGDIQLTHVQT.

2 Galectin domains span residues 17-147 (FTGI…INFQ) and 226-354 (FFTS…HVQT). Residues Asn47, His60, Arg64, Asn74, 81–87 (WGPEERK), His266, Arg270, Thr280, and 286–292 (WGPEERS) contribute to the a beta-D-galactoside site.

The isoform Long is expressed exclusively in the small intestine.

It is found in the cytoplasm. Its subcellular location is the nucleus. It localises to the secreted. Binds galactosides. Has high affinity for the Forssman pentasaccharide. Ligand for HAVCR2/TIM3. Binding to HAVCR2 induces T-helper type 1 lymphocyte (Th1) death. Also stimulates bactericidal activity in infected macrophages by causing macrophage activation and IL1B secretion which restricts intracellular bacterial growth. Ligand for P4HB; the interaction retains P4HB at the cell surface of Th2 T helper cells, increasing disulfide reductase activity at the plasma membrane, altering the plasma membrane redox state and enhancing cell migration. Ligand for CD44; the interaction enhances binding of SMAD3 to the FOXP3 promoter, leading to up-regulation of FOXP3 expression and increased induced regulatory T (iTreg) cell stability and suppressive function. Promotes ability of mesenchymal stromal cells to suppress T-cell proliferation. Expands regulatory T-cells and induces cytotoxic T-cell apoptosis following virus infection. Activates ERK1/2 phosphorylation inducing cytokine (IL-6, IL-8, IL-12) and chemokine (CCL2) production in mast and dendritic cells. Inhibits degranulation and induces apoptosis of mast cells. Induces maturation and migration of dendritic cells. Inhibits natural killer (NK) cell function. Can transform NK cell phenotype from peripheral to decidual during pregnancy. Astrocyte derived galectin-9 enhances microglial TNF production. May play a role in thymocyte-epithelial interactions relevant to the biology of the thymus. May provide the molecular basis for urate flux across cell membranes, allowing urate that is formed during purine metabolism to efflux from cells and serving as an electrogenic transporter that plays an important role in renal and gastrointestinal urate excretion. Highly selective to the anion urate. This Rattus norvegicus (Rat) protein is Galectin-9 (Lgals9).